Consider the following 155-residue polypeptide: Ribosome maturation factor RimP (155 aa).

This sequence belongs to the RimP family.

The protein resides in the cytoplasm. Required for maturation of 30S ribosomal subunits. The protein is Ribosome maturation factor RimP of Parabacteroides distasonis (strain ATCC 8503 / DSM 20701 / CIP 104284 / JCM 5825 / NCTC 11152).